The chain runs to 248 residues: DNA repair protein RecO (248 aa).

It belongs to the RecO family.

Involved in DNA repair and RecF pathway recombination. This Bacillus mycoides (strain KBAB4) (Bacillus weihenstephanensis) protein is DNA repair protein RecO.